The following is a 163-amino-acid chain: Crossover junction endodeoxyribonuclease RuvC (163 aa).

Catalysis depends on residues aspartate 9, glutamate 76, and aspartate 148. Mg(2+) contacts are provided by aspartate 9, glutamate 76, and aspartate 148.

This sequence belongs to the RuvC family. Homodimer which binds Holliday junction (HJ) DNA. The HJ becomes 2-fold symmetrical on binding to RuvC with unstacked arms; it has a different conformation from HJ DNA in complex with RuvA. In the full resolvosome a probable DNA-RuvA(4)-RuvB(12)-RuvC(2) complex forms which resolves the HJ. Requires Mg(2+) as cofactor.

Its subcellular location is the cytoplasm. It carries out the reaction Endonucleolytic cleavage at a junction such as a reciprocal single-stranded crossover between two homologous DNA duplexes (Holliday junction).. Its function is as follows. The RuvA-RuvB-RuvC complex processes Holliday junction (HJ) DNA during genetic recombination and DNA repair. Endonuclease that resolves HJ intermediates. Cleaves cruciform DNA by making single-stranded nicks across the HJ at symmetrical positions within the homologous arms, yielding a 5'-phosphate and a 3'-hydroxyl group; requires a central core of homology in the junction. The consensus cleavage sequence is 5'-(A/T)TT(C/G)-3'. Cleavage occurs on the 3'-side of the TT dinucleotide at the point of strand exchange. HJ branch migration catalyzed by RuvA-RuvB allows RuvC to scan DNA until it finds its consensus sequence, where it cleaves and resolves the cruciform DNA. This is Crossover junction endodeoxyribonuclease RuvC from Nostoc sp. (strain PCC 7120 / SAG 25.82 / UTEX 2576).